A 139-amino-acid polypeptide reads, in one-letter code: MAAAIQALLVLALLHLATATPVIGKQTVSTLSTGYLGHPVVGGLGYGGLGYGGLGVAGLGVAGLGYGGLGYPGAALGGVYTHHAAGLVHPYGGLGYHAAPYHHALGGLGYPLGIGAGVVAPHVVKGKIAAPLAPVVAAI.

The first 19 residues, 1–19 (MAAAIQALLVLALLHLATA), serve as a signal peptide directing secretion. Tandem repeats lie at residues 42–46 (GGLGY), 47–51 (GGLGY), 52–56 (GGLGV), 57–61 (AGLGV), 62–66 (AGLGY), 67–71 (GGLGY), 92–96 (GGLGY), and 106–110 (GGLGY). The 8 X 5 AA approximate repeats stretch occupies residues 42-110 (GGLGYGGLGY…YHHALGGLGY (69 aa)).

As to quaternary structure, the polymeric lamprin chains self-aggregate to form fibers and have secondary structures particularly rich in beta-sheets and in beta-turns.

It localises to the secreted. The protein resides in the extracellular space. The protein localises to the extracellular matrix. In terms of biological role, self-aggregating protein that is part of the soluble form of lamprin. This Petromyzon marinus (Sea lamprey) protein is Lamprin 0.9.